Consider the following 320-residue polypeptide: tRNA dimethylallyltransferase (320 aa).

14–21 (GPTASGKT) provides a ligand contact to ATP. 16–21 (TASGKT) contacts substrate. Interaction with substrate tRNA regions lie at residues 39–42 (DSAL) and 163–167 (QRLQR).

It belongs to the IPP transferase family. As to quaternary structure, monomer. It depends on Mg(2+) as a cofactor.

The enzyme catalyses adenosine(37) in tRNA + dimethylallyl diphosphate = N(6)-dimethylallyladenosine(37) in tRNA + diphosphate. Catalyzes the transfer of a dimethylallyl group onto the adenine at position 37 in tRNAs that read codons beginning with uridine, leading to the formation of N6-(dimethylallyl)adenosine (i(6)A). The chain is tRNA dimethylallyltransferase from Thioalkalivibrio sulfidiphilus (strain HL-EbGR7).